The sequence spans 131 residues: MSWQAYVDEHLMCEIEGHHLASAAILGHDGTVWAQSADFPQFKPEEITGIMKDFDEPGHLAPTGMFVATAKYMVIQGEPGAVIRGKKGAGGITIKKTGQALVVGIYDEPMTPGQCNMVVERLGDYLMKQGL.

Cys-13 and Cys-115 are oxidised to a cystine. Positions 81 to 97 (AVIRGKKGAGGITIKKT) match the Involved in PIP2 interaction motif. Thr-111 carries the phosphothreonine modification.

This sequence belongs to the profilin family. In terms of assembly, occurs in many kinds of cells as a complex with monomeric actin in a 1:1 ratio. Post-translationally, phosphorylated by MAP kinases.

It is found in the cytoplasm. The protein resides in the cytoskeleton. Functionally, binds to actin and affects the structure of the cytoskeleton. At high concentrations, profilin prevents the polymerization of actin, whereas it enhances it at low concentrations. This is Profilin-7 from Olea europaea (Common olive).